Consider the following 164-residue polypeptide: Crossover junction endodeoxyribonuclease RuvC (164 aa).

Catalysis depends on residues Asp-7, Glu-67, and Asp-139. Mg(2+)-binding residues include Asp-7, Glu-67, and Asp-139.

Belongs to the RuvC family. In terms of assembly, homodimer which binds Holliday junction (HJ) DNA. The HJ becomes 2-fold symmetrical on binding to RuvC with unstacked arms; it has a different conformation from HJ DNA in complex with RuvA. In the full resolvosome a probable DNA-RuvA(4)-RuvB(12)-RuvC(2) complex forms which resolves the HJ. It depends on Mg(2+) as a cofactor.

The protein localises to the cytoplasm. The enzyme catalyses Endonucleolytic cleavage at a junction such as a reciprocal single-stranded crossover between two homologous DNA duplexes (Holliday junction).. The RuvA-RuvB-RuvC complex processes Holliday junction (HJ) DNA during genetic recombination and DNA repair. Endonuclease that resolves HJ intermediates. Cleaves cruciform DNA by making single-stranded nicks across the HJ at symmetrical positions within the homologous arms, yielding a 5'-phosphate and a 3'-hydroxyl group; requires a central core of homology in the junction. The consensus cleavage sequence is 5'-(A/T)TT(C/G)-3'. Cleavage occurs on the 3'-side of the TT dinucleotide at the point of strand exchange. HJ branch migration catalyzed by RuvA-RuvB allows RuvC to scan DNA until it finds its consensus sequence, where it cleaves and resolves the cruciform DNA. The protein is Crossover junction endodeoxyribonuclease RuvC of Geobacter sulfurreducens (strain ATCC 51573 / DSM 12127 / PCA).